Here is a 1058-residue protein sequence, read N- to C-terminus: Lon protease homolog, mitochondrial (1058 aa).

The N-terminal 47 residues, 1–47 (MLTRIRNAGVGGNAARRVRLLAGYTGARMAHAAALNSTTGAGGAARA), are a transit peptide targeting the mitochondrion. The disordered stretch occupies residues 72–151 (GGQCILKQDR…RSNPPSEGEV (80 aa)). Composition is skewed to basic and acidic residues over residues 78 to 97 (KQDR…RAEE) and 106 to 118 (DEEA…EEQA). Positions 129–142 (GSGGSASSAGGGGR) are enriched in gly residues. The Lon N-terminal domain occupies 158–412 (LMVLPMSNRP…KALVFIKKEV (255 aa)). Residue 564 to 571 (GPPGVGKT) participates in ATP binding. The tract at residues 778 to 814 (TPKSAPAETNIEPENGKPDASAKPLTNNLPAPEPLNI) is disordered. The Lon proteolytic domain maps to 844–1030 (KTPAGVVMGL…DDVFNVLFGS (187 aa)). Active-site residues include serine 936 and lysine 979.

The protein belongs to the peptidase S16 family. Homohexamer or homoheptamer. Organized in a ring with a central cavity.

Its subcellular location is the mitochondrion matrix. It catalyses the reaction Hydrolysis of proteins in presence of ATP.. ATP-dependent serine protease that mediates the selective degradation of misfolded, unassembled or oxidatively damaged polypeptides as well as certain short-lived regulatory proteins in the mitochondrial matrix. May also have a chaperone function in the assembly of inner membrane protein complexes. Participates in the regulation of mitochondrial gene expression and in the maintenance of the integrity of the mitochondrial genome. Binds to mitochondrial DNA in a site-specific manner. This Eremothecium gossypii (strain ATCC 10895 / CBS 109.51 / FGSC 9923 / NRRL Y-1056) (Yeast) protein is Lon protease homolog, mitochondrial.